A 236-amino-acid polypeptide reads, in one-letter code: UPF0257 lipoprotein YnfC (236 aa).

An N-terminal signal peptide occupies residues 1–16 (MKKPLLLTLLCMILAG). Cys-17 is lipidated: N-palmitoyl cysteine. The S-diacylglycerol cysteine moiety is linked to residue Cys-17.

This sequence belongs to the UPF0257 family.

The protein resides in the cell membrane. This is UPF0257 lipoprotein YnfC from Salmonella typhi.